Consider the following 135-residue polypeptide: HVA22-like protein d (135 aa).

Transmembrane regions (helical) follow at residues 11–31 (LHSGAGPIVMLLYPLYASVIA), 42–62 (QWLAYWIIYSFLSLTELILQS), and 63–83 (LIEWIPIWYTVKLVFVAWLVL).

Belongs to the DP1 family. As to expression, predominantly expressed in flower buds.

The protein resides in the membrane. The protein is HVA22-like protein d (HVA22D) of Arabidopsis thaliana (Mouse-ear cress).